The following is a 1165-amino-acid chain: Activity-dependent neuroprotector homeobox protein 2 (1165 aa).

The C2H2-type 1 zinc finger occupies Tyr-73 to His-96. The C2H2-type 2; degenerate zinc finger occupies Ile-106–His-128. Lys-146 is covalently cross-linked (Glycyl lysine isopeptide (Lys-Gly) (interchain with G-Cter in SUMO2)). The segment at Phe-155–His-178 adopts a C2H2-type 3; degenerate zinc-finger fold. The C2H2-type 4 zinc-finger motif lies at Tyr-215 to His-240. Over residues Ser-303–Ser-318 the composition is skewed to low complexity. The interval Ser-303 to Ala-327 is disordered. The C2H2-type 5; degenerate zinc-finger motif lies at Lys-696–His-718. The segment at Gln-724–His-746 adopts a C2H2-type 6; degenerate zinc-finger fold. The segment at Val-777 to His-798 adopts a C2H2-type 7; degenerate zinc-finger fold. C2H2-type zinc fingers lie at residues Leu-800–His-823 and Leu-905–His-935. Residues Pro-1005–Ala-1068 form a disordered region. Residues Lys-1009 and Lys-1048 each participate in a glycyl lysine isopeptide (Lys-Gly) (interchain with G-Cter in SUMO2) cross-link. Residues Lys-1009–Glu-1024 show a composition bias toward basic and acidic residues. The homeobox DNA-binding region spans Asp-1090 to Ile-1132.

Belongs to the krueppel C2H2-type zinc-finger protein family. As to quaternary structure, may interact with SMARCA4/BRG1. Expressed widely, with the highest level in the brain.

Its subcellular location is the nucleus. Its function is as follows. May be involved in transcriptional regulation. May play a role in neuronal function; perhaps involved in protection of brain tissues from oxidative stress. May be involved in erythroid differentiation. The chain is Activity-dependent neuroprotector homeobox protein 2 (Adnp2) from Mus musculus (Mouse).